A 147-amino-acid polypeptide reads, in one-letter code: Prefoldin subunit alpha 2 (147 aa).

This sequence belongs to the prefoldin subunit alpha family. Heterohexamer of two alpha and four beta subunits.

The protein localises to the cytoplasm. In terms of biological role, molecular chaperone capable of stabilizing a range of proteins. Seems to fulfill an ATP-independent, HSP70-like function in archaeal de novo protein folding. This Methanocaldococcus jannaschii (strain ATCC 43067 / DSM 2661 / JAL-1 / JCM 10045 / NBRC 100440) (Methanococcus jannaschii) protein is Prefoldin subunit alpha 2 (pfdA2).